An 870-amino-acid chain; its full sequence is MQLITNFSSSSSELQFLVDKVKRESLSSSSSNTQNLFLSTSPYDTAWLALIPHPHHHHHHGRPMFEKCLQWILHNQTPQGFWAAAGDNISDTDDDVTLDCLLSTLACLVALKRWQLAPDMIHKGLEFVNRNTERLVMKQKPSDVPRWFTIMFPAMLELAGASSLRVDFSENLNRILVELSQNRDDILTREEVDEKKQYSPLLLFLEALPAQSYDNDVLKQIIDKNLSNDGSLLQSPSATARAYMITGNTRCLSYLHSLTNSCSNGGVPSFYPVDDDLHDLVMVNQLTRSGLTEHLIPEIDHLLLKVQKNYKYKKASPKSLYSIAAELYRDSLAFWLLRVNNHWVSPSIFCWFLDDDEIRDHIETNYEEFAAVLLNVYRATDLMFSGEVQLVEARSFATKNLEKILATGNIHKTNADISSSLHKMIEHELRVPWTARMDHVENRIWIEEIASSALWFGKSSYLRLSCFHKMSLQQLAVKNYTLRQLVYRDELAEVERWSKERGLCDMGFCREKTGYCYYAFAASTCLPWSSDVRLVLTKAAVVITVADDFFDVEGSMVDLEKLTDAVRRWDAEGLGSHSKTIFEALDDLVNEVRLKCFQQNGQDIKNNLQQLWYETFHSWLMEAKWGKGLTSKPSVDVYLGNAMTSIAAHTMVLTASCLLGPGFPVHQLWSQRRHQDITSLLMVLTRLLNDIQSYLKEEDEGKINYVWMYMIENNQASIDDSVRHVQTIINVKKQEFIQRVLSDQHCNLPKSFKQLHFSCLKVFNMFFNSSNIFDTDTDLLLDIHEAFVSPPQVPKFKPHIKPPHQLPATLQPPHQPQQIMVNKKKVEMVYKSYHHPFKVFTLQKKQSSGHGTMNPRASILAGPNIKLCFS.

Residues Asp-547, Asp-551, Asn-689, Ser-693, and Glu-697 each contribute to the Mg(2+) site. Residues 547–551 carry the DDXXD motif motif; it reads DDFFD.

This sequence belongs to the terpene synthase family. The cofactor is Mg(2+). Mn(2+) is required as a cofactor. Highly expressed in cells of the transmitting tract of the stigma and style and in the epidermal cells of petals, as well as in stamens.

The catalysed reaction is (2E)-geranyl diphosphate + H2O = (S)-linalool + diphosphate. Functionally, involved in the biosynthesis of the acyclic monoterpene S-linalool, a major component of the strong sweet scent of the C.breweri flowers. This is S-linalool synthase (LIS) from Clarkia breweri (Fairy fans).